The primary structure comprises 298 residues: MTRTDGDTWDLATSVGSTATGVAAMRALATRQPDPLIDDPYADALVKAVGLEHCIALADGETCVEGDPMLDLNRMCEQIAVRTRYFDELFIAAGADGVRQAVILASGLDTRAYRLDWPAGTVVFEVDQPQVIEFKTRTLADLGAQPTAERRTVAVDLRDDWPAALRDAGFDPAEPTAWIAEGLLIYLPAEAQDRLLDNITALSAPGSRLATEHMDHRILAEGAGKRIGEWSRRVGSSLDIADLFYTGERNTAGDYLRGLGWQVTVRPSKEAYADHGFELPEEMAELSGDSGYLSAHLK.

S-adenosyl-L-methionine-binding positions include Asp-127 and 156 to 157 (DL).

Belongs to the UPF0677 family.

Functionally, exhibits S-adenosyl-L-methionine-dependent methyltransferase activity. The protein is Putative S-adenosyl-L-methionine-dependent methyltransferase MSMEG_1480/MSMEI_1444 of Mycolicibacterium smegmatis (strain ATCC 700084 / mc(2)155) (Mycobacterium smegmatis).